The chain runs to 321 residues: Phosphate acyltransferase (321 aa).

It belongs to the PlsX family. Homodimer. Probably interacts with PlsY.

It localises to the cytoplasm. It carries out the reaction a fatty acyl-[ACP] + phosphate = an acyl phosphate + holo-[ACP]. Its pathway is lipid metabolism; phospholipid metabolism. Its function is as follows. Catalyzes the reversible formation of acyl-phosphate (acyl-PO(4)) from acyl-[acyl-carrier-protein] (acyl-ACP). This enzyme utilizes acyl-ACP as fatty acyl donor, but not acyl-CoA. The chain is Phosphate acyltransferase from Chlamydia trachomatis serovar L2 (strain ATCC VR-902B / DSM 19102 / 434/Bu).